The chain runs to 702 residues: Ribosomal RNA large subunit methyltransferase K/L (702 aa).

The region spanning 43–154 (LIYQSLMWSR…KETASIALDL (112 aa)) is the THUMP domain.

Belongs to the methyltransferase superfamily. RlmKL family.

It localises to the cytoplasm. The enzyme catalyses guanosine(2445) in 23S rRNA + S-adenosyl-L-methionine = N(2)-methylguanosine(2445) in 23S rRNA + S-adenosyl-L-homocysteine + H(+). It catalyses the reaction guanosine(2069) in 23S rRNA + S-adenosyl-L-methionine = N(2)-methylguanosine(2069) in 23S rRNA + S-adenosyl-L-homocysteine + H(+). Its function is as follows. Specifically methylates the guanine in position 2445 (m2G2445) and the guanine in position 2069 (m7G2069) of 23S rRNA. The polypeptide is Ribosomal RNA large subunit methyltransferase K/L (Salmonella schwarzengrund (strain CVM19633)).